Consider the following 304-residue polypeptide: UDP-N-acetylenolpyruvoylglucosamine reductase (304 aa).

Residues R33–G198 form the FAD-binding PCMH-type domain. The active site involves R177. The active-site Proton donor is S227. E297 is a catalytic residue.

The protein belongs to the MurB family. FAD is required as a cofactor.

The protein resides in the cytoplasm. It carries out the reaction UDP-N-acetyl-alpha-D-muramate + NADP(+) = UDP-N-acetyl-3-O-(1-carboxyvinyl)-alpha-D-glucosamine + NADPH + H(+). It participates in cell wall biogenesis; peptidoglycan biosynthesis. Its function is as follows. Cell wall formation. This Clostridium botulinum (strain Eklund 17B / Type B) protein is UDP-N-acetylenolpyruvoylglucosamine reductase.